We begin with the raw amino-acid sequence, 172 residues long: Small ribosomal subunit protein uS5 (172 aa).

One can recognise an S5 DRBM domain in the interval 17–80 (LREKMISVNR…EQARRNMFKV (64 aa)).

Belongs to the universal ribosomal protein uS5 family. As to quaternary structure, part of the 30S ribosomal subunit. Contacts proteins S4 and S8.

In terms of biological role, with S4 and S12 plays an important role in translational accuracy. Functionally, located at the back of the 30S subunit body where it stabilizes the conformation of the head with respect to the body. In Paraburkholderia phymatum (strain DSM 17167 / CIP 108236 / LMG 21445 / STM815) (Burkholderia phymatum), this protein is Small ribosomal subunit protein uS5.